Here is a 164-residue protein sequence, read N- to C-terminus: Small ribosomal subunit protein uS5 (164 aa).

The S5 DRBM domain occupies 10 to 73 (LEERVVAINR…EAAKKNMIEV (64 aa)).

Belongs to the universal ribosomal protein uS5 family. Part of the 30S ribosomal subunit. Contacts proteins S4 and S8.

Its function is as follows. With S4 and S12 plays an important role in translational accuracy. In terms of biological role, located at the back of the 30S subunit body where it stabilizes the conformation of the head with respect to the body. The sequence is that of Small ribosomal subunit protein uS5 from Streptococcus pyogenes serotype M1.